The chain runs to 207 residues: Large ribosomal subunit protein bL25 (207 aa).

Belongs to the bacterial ribosomal protein bL25 family. CTC subfamily. In terms of assembly, part of the 50S ribosomal subunit; part of the 5S rRNA/L5/L18/L25 subcomplex. Contacts the 5S rRNA. Binds to the 5S rRNA independently of L5 and L18.

Functionally, this is one of the proteins that binds to the 5S RNA in the ribosome where it forms part of the central protuberance. This chain is Large ribosomal subunit protein bL25, found in Brucella abortus (strain S19).